A 418-amino-acid chain; its full sequence is MLHPRARTMLLLSLPAVAIGIASSLILIVVMKIASALQNLLWQRLPGTLGIAQDSPLWIIGVLTLTGIAVGLVIRFSQGHAGPDPACEPLIGAPVPPSALPGLIVALILGLAGGVSLGPEHPIMTVNIALAVAIGARLLPRVNRMEWTILASAGTIGALFGTPVAAALIFSQTLNGSSEVPLWDRLFAPLMAAAAGALTTGLFFHPHFSLPIAHYGQMEMTDILSGAIVAAIAIAAGMVAVWCLPRLHAMMNQMKNPVLVLGIGGFILGILGVIGGPVSLFKGLDEMQQMVANQAFSTSDYFLLAVIKLAALVVAAASGFRGGRIFPAVFVGVALGLMLHEHVPAVPAAITVSCAILGIVLVVTRDGWLSLFMAAVVVPNTTLLPLLCIVMLPAWLLLAGKPMMMVNRPKQQPPHDNV.

Transmembrane regions (helical) follow at residues 10–30, 54–74, 99–119, 120–140, 149–169, 186–206, 223–243, 258–278, 300–320, 322–342, 343–363, and 371–391; these read LLLS…LIVV, DSPL…GLVI, ALPG…SLGP, EHPI…RLLP, ILAS…AALI, LFAP…FFHP, ILSG…AVWC, VLVL…GGPV, DYFL…ASGF, GGRI…LHEH, VPAV…VLVV, and LFMA…CIVM.

It belongs to the chloride channel (TC 2.A.49) family.

It is found in the cell membrane. The chain is Putative ion-transport protein YfeO from Escherichia coli O8 (strain IAI1).